A 129-amino-acid chain; its full sequence is Small ribosomal subunit protein uS11c (129 aa).

This sequence belongs to the universal ribosomal protein uS11 family. Part of the 30S ribosomal subunit.

It localises to the plastid. The protein resides in the chloroplast. This chain is Small ribosomal subunit protein uS11c, found in Euglena gracilis.